Consider the following 407-residue polypeptide: MSQKLVLILNCGSSSLKFSILDPKTGEEKLSGLAEAFYLDDARIKWKLHGEKGNAELGKGAAHSEALNFIVNNIFPLDPTLKDGIVAIGHRIVHGGEKFTSSVIVTDEVVKGIEDAIQFAPLHNPAHLIGIKEAFKIFPHLKDKNVVVFDTAFHQTMPEEAYLYALPYSLYKEHGVRRYGAHGTSHYFVSREAAKRLGVAEDKVNVITCHLGNGGSVSAVRHGQCIDTSMGLTPLEGLVMGTRCGDIDPAIMFYMHDTLGMSVEEINTTLTKKSGLLGLTEVTSDCRFAEDNYDNEDESLRVPAKRAMDVYCYRLAKYIGSYMAVIGERLDAIVFTGGIGENSAHVREITLNHLKLFGYQLDQEKNLAARFGNEGIITADNTPIAMVIPTNEELVIAQDTARLCIKD.

N10 provides a ligand contact to Mg(2+). K17 lines the ATP pocket. R91 serves as a coordination point for substrate. The active-site Proton donor/acceptor is D150. ATP is bound by residues 210–214 (HLGNG), 285–287 (DCR), and 338–342 (GIGEN). E392 provides a ligand contact to Mg(2+).

This sequence belongs to the acetokinase family. In terms of assembly, homodimer. Mg(2+) serves as cofactor. Mn(2+) is required as a cofactor.

The protein localises to the cytoplasm. It carries out the reaction acetate + ATP = acetyl phosphate + ADP. It functions in the pathway metabolic intermediate biosynthesis; acetyl-CoA biosynthesis; acetyl-CoA from acetate: step 1/2. Its function is as follows. Catalyzes the formation of acetyl phosphate from acetate and ATP. Can also catalyze the reverse reaction. The protein is Acetate kinase of Mannheimia succiniciproducens (strain KCTC 0769BP / MBEL55E).